Here is a 522-residue protein sequence, read N- to C-terminus: Response regulator mcs4 (522 aa).

A disordered region spans residues 148–274 (DSLESPVSAP…RSISHSSLYT (127 aa)). Residues 174-194 (NLRNASRTRSHQTLPSSNVNK) are compositionally biased toward polar residues. Residues 244 to 255 (RSDESTAEKLAK) show a composition bias toward basic and acidic residues. Over residues 260–274 (TPTNSRSISHSSLYT) the composition is skewed to polar residues. In terms of domain architecture, Response regulatory spans 363 to 505 (NVLIVEDNII…WLEKKITEWG (143 aa)). 4-aspartylphosphate is present on D412.

The protein localises to the cytoplasm. In terms of biological role, response regulator that coordinately controls the stress activated wak1-wis1-sty1 MAP kinase pathway and fission yeast cell cycle. In Schizosaccharomyces pombe (strain 972 / ATCC 24843) (Fission yeast), this protein is Response regulator mcs4 (mcs4).